Consider the following 118-residue polypeptide: Sporulation protein YjcA (118 aa).

Transmembrane regions (helical) follow at residues 8–28 (IVLLSLAVFRLARLLVFDTIM), 62–82 (FIGELLSCYWCTGVWCAGFLI), and 92–112 (AQWLILLLAIAGLAGIIETLV).

This sequence belongs to the UPF0713 family.

It is found in the cell membrane. Involved in sporulation. This is Sporulation protein YjcA (yjcA) from Bacillus subtilis (strain 168).